Consider the following 240-residue polypeptide: UDP-2,3-diacylglucosamine hydrolase (240 aa).

Aspartate 8, histidine 10, aspartate 41, asparagine 79, and histidine 114 together coordinate Mn(2+). 79 to 80 (NR) is a substrate binding site. Aspartate 122, serine 160, asparagine 164, lysine 167, and histidine 195 together coordinate substrate. Mn(2+)-binding residues include histidine 195 and histidine 197.

The protein belongs to the LpxH family. Mn(2+) serves as cofactor.

Its subcellular location is the cell inner membrane. The catalysed reaction is UDP-2-N,3-O-bis[(3R)-3-hydroxytetradecanoyl]-alpha-D-glucosamine + H2O = 2-N,3-O-bis[(3R)-3-hydroxytetradecanoyl]-alpha-D-glucosaminyl 1-phosphate + UMP + 2 H(+). Its pathway is glycolipid biosynthesis; lipid IV(A) biosynthesis; lipid IV(A) from (3R)-3-hydroxytetradecanoyl-[acyl-carrier-protein] and UDP-N-acetyl-alpha-D-glucosamine: step 4/6. Its function is as follows. Hydrolyzes the pyrophosphate bond of UDP-2,3-diacylglucosamine to yield 2,3-diacylglucosamine 1-phosphate (lipid X) and UMP by catalyzing the attack of water at the alpha-P atom. Involved in the biosynthesis of lipid A, a phosphorylated glycolipid that anchors the lipopolysaccharide to the outer membrane of the cell. This Salmonella agona (strain SL483) protein is UDP-2,3-diacylglucosamine hydrolase.